The sequence spans 308 residues: MTTPAFPDLVPALAAALPELRGKLTANAPIADVTWFRVGGPAQVLFQPADEADLAYALAHLPAEIPVTVIGLGSNLIVRDGGVPGMVIRLGRGFTDIAVDGTTIVAGAGVPDVKVARAAADAGLAGLAFLRGIPGAIGGALRMNGGAYGGETKDALMSARAVDRAGRIHILSLDDMGFTYRHSAAPEDFIFTQATFRGTPGEVAEIQAEMERITSSREATQPIKSRTGGSTFKNPPGHKAWQLVDAAGCRGLVLGRAQVSEMHTNFLINLGCATAAEIEGLGEEVRRRVLETSGVTLEWEIKRIGLPA.

The region spanning 37–201 (RVGGPAQVLF…TQATFRGTPG (165 aa)) is the FAD-binding PCMH-type domain. Arg181 is a catalytic residue. Over residues 216-233 (SREATQPIKSRTGGSTFK) the composition is skewed to polar residues. Residues 216–236 (SREATQPIKSRTGGSTFKNPP) form a disordered region. Ser230 acts as the Proton donor in catalysis. Residue Glu300 is part of the active site.

It belongs to the MurB family. FAD serves as cofactor.

The protein localises to the cytoplasm. It catalyses the reaction UDP-N-acetyl-alpha-D-muramate + NADP(+) = UDP-N-acetyl-3-O-(1-carboxyvinyl)-alpha-D-glucosamine + NADPH + H(+). The protein operates within cell wall biogenesis; peptidoglycan biosynthesis. Cell wall formation. This chain is UDP-N-acetylenolpyruvoylglucosamine reductase, found in Azorhizobium caulinodans (strain ATCC 43989 / DSM 5975 / JCM 20966 / LMG 6465 / NBRC 14845 / NCIMB 13405 / ORS 571).